Reading from the N-terminus, the 562-residue chain is Formate--tetrahydrofolate ligase (562 aa).

Position 71-78 (71-78 (TPAGEGKS)) interacts with ATP.

Belongs to the formate--tetrahydrofolate ligase family.

The catalysed reaction is (6S)-5,6,7,8-tetrahydrofolate + formate + ATP = (6R)-10-formyltetrahydrofolate + ADP + phosphate. It participates in one-carbon metabolism; tetrahydrofolate interconversion. The polypeptide is Formate--tetrahydrofolate ligase (Bacillus cereus (strain ATCC 10987 / NRS 248)).